The chain runs to 576 residues: DNA mismatch repair protein MutL (576 aa).

Belongs to the DNA mismatch repair MutL/HexB family.

Its function is as follows. This protein is involved in the repair of mismatches in DNA. It is required for dam-dependent methyl-directed DNA mismatch repair. May act as a 'molecular matchmaker', a protein that promotes the formation of a stable complex between two or more DNA-binding proteins in an ATP-dependent manner without itself being part of a final effector complex. The polypeptide is DNA mismatch repair protein MutL (Chlamydia trachomatis serovar L2 (strain ATCC VR-902B / DSM 19102 / 434/Bu)).